The primary structure comprises 858 residues: DNA mismatch repair protein MutS (858 aa).

An ATP-binding site is contributed by 600-607 (GPNMSGKS). The tract at residues 803 to 823 (EAASDEVDDNNSENSPMTDAE) is disordered.

It belongs to the DNA mismatch repair MutS family.

Its function is as follows. This protein is involved in the repair of mismatches in DNA. It is possible that it carries out the mismatch recognition step. This protein has a weak ATPase activity. The sequence is that of DNA mismatch repair protein MutS from Lactobacillus helveticus (strain DPC 4571).